A 258-amino-acid chain; its full sequence is Proliferating cell nuclear antigen (258 aa).

Residues 61 to 80 mediate DNA binding; the sequence is RCDHPVTLGMDLTSLSKILR. A Glycyl lysine isopeptide (Lys-Gly) (interchain with G-Cter in SUMO) cross-link involves residue Lys-127. Lys-164 is covalently cross-linked (Glycyl lysine isopeptide (Lys-Gly) (interchain with G-Cter in SUMO); alternate). A Glycyl lysine isopeptide (Lys-Gly) (interchain with G-Cter in ubiquitin); alternate cross-link involves residue Lys-164.

The protein belongs to the PCNA family. As to quaternary structure, homotrimer. Interacts with RAD30. Interacts with MCM10. Interacts with UBP10. Sumoylated on Lys-164, and to a lesser extent on Lys-127 by the UBC9/SIZ1 complex during S-phase; which impairs ubiquitination and function in DNA repair. Post-translationally, monoubiquitinated on Lys-164 by the UBC2/RAD18 complex upon DNA damage, and then polyubiquitinated through 'Lys-63'-linkage by UBC13/MMS2. Ubiquitination is required for UBC2-mediated DNA repair. In terms of processing, lys-164 is deubiquitinated by UBP10.

It is found in the nucleus. This protein is an auxiliary protein of DNA polymerase delta and is involved in the control of eukaryotic DNA replication by increasing the polymerase's processibility during elongation of the leading strand. Involved in DNA repair. This is Proliferating cell nuclear antigen (POL30) from Saccharomyces cerevisiae (strain ATCC 204508 / S288c) (Baker's yeast).